The sequence spans 60 residues: Large ribosomal subunit protein uL30 (60 aa).

Belongs to the universal ribosomal protein uL30 family. As to quaternary structure, part of the 50S ribosomal subunit.

The protein is Large ribosomal subunit protein uL30 of Desulforapulum autotrophicum (strain ATCC 43914 / DSM 3382 / VKM B-1955 / HRM2) (Desulfobacterium autotrophicum).